The primary structure comprises 498 residues: MSGYILAIDQGTTSTRSMLFDRNMRVVGLGQQEFTQHFPSSGWVEHDAEEIWKSVQSTIRIALAQAGISAADVAAIGITNQRETTVVWDRISGKPVHRAIVWQDRRTAQFCDELKRRNLEPLFTEKTGLLLDPYFSGTKLAWLLNHVPGLRERAQKGQVCFGTIDSWLIYKLTGGKAHVTDATNASRTLIYHIGENRWDDELLDILGIPAAMLPEVKDCAADFGMTDPALFGVSIPILGVAGDQQAAVIGNACFEPGMMKSTYGTGCFALLNTGTDRVTSSNRLLTTIAYRLDGVTTYALEGSIFIAGAAVQWLRDEMGFISVASEVSALAEKADPNQRIYLVPAFTGLGAPYWDAEARGAIFGLTRGTGRAEFARAALESVAYQTFDLLEAMQGDWKGATNHTVLRVDGGMVASDWTMQRLADILNAPVDRPVFLETTVLGAAWLAASRAGIWPDRKGFSERWQRDCRFEPAMPEKERESAIAGWRDSVSRCLTRPQ.

T12 serves as a coordination point for ADP. The ATP site is built by T12, T13, and S14. T12 serves as a coordination point for sn-glycerol 3-phosphate. ADP is bound at residue R16. Sn-glycerol 3-phosphate contacts are provided by R82, E83, Y134, and D243. Positions 82, 83, 134, 243, and 244 each coordinate glycerol. Residues T265 and G308 each contribute to the ADP site. Residues T265, G308, Q312, and G411 each coordinate ATP. G411 is an ADP binding site.

It belongs to the FGGY kinase family.

It catalyses the reaction glycerol + ATP = sn-glycerol 3-phosphate + ADP + H(+). It participates in polyol metabolism; glycerol degradation via glycerol kinase pathway; sn-glycerol 3-phosphate from glycerol: step 1/1. With respect to regulation, inhibited by fructose 1,6-bisphosphate (FBP). In terms of biological role, key enzyme in the regulation of glycerol uptake and metabolism. Catalyzes the phosphorylation of glycerol to yield sn-glycerol 3-phosphate. In Brucella canis (strain ATCC 23365 / NCTC 10854 / RM-666), this protein is Glycerol kinase.